The chain runs to 374 residues: Pectate lyase 1 (374 aa).

Positions 1-22 (MKYLLPSAAAGLLLLAAQPTMA) are cleaved as a signal peptide. Cys-93 and Cys-176 are joined by a disulfide. Ca(2+) is bound by residues Asp-150, Asp-152, Glu-187, and Asp-191. Arg-239 is an active-site residue. Cys-350 and Cys-373 are disulfide-bonded.

Belongs to the polysaccharide lyase 1 family. PLADES subfamily. It depends on Ca(2+) as a cofactor.

It localises to the secreted. The catalysed reaction is Eliminative cleavage of (1-&gt;4)-alpha-D-galacturonan to give oligosaccharides with 4-deoxy-alpha-D-galact-4-enuronosyl groups at their non-reducing ends.. Its pathway is glycan metabolism; pectin degradation; 2-dehydro-3-deoxy-D-gluconate from pectin: step 2/5. Functionally, involved in maceration and soft-rotting of plant tissue. This is Pectate lyase 1 (pel1) from Pectobacterium atrosepticum (strain SCRI 1043 / ATCC BAA-672) (Erwinia carotovora subsp. atroseptica).